A 186-amino-acid chain; its full sequence is Ribosome-recycling factor (186 aa).

Belongs to the RRF family.

Its subcellular location is the cytoplasm. In terms of biological role, responsible for the release of ribosomes from messenger RNA at the termination of protein biosynthesis. May increase the efficiency of translation by recycling ribosomes from one round of translation to another. In Rickettsia massiliae (strain Mtu5), this protein is Ribosome-recycling factor.